The following is a 521-amino-acid chain: Probable ATP-dependent RNA helicase Dbp45A (521 aa).

Positions 7 to 35 (NPFQILGLRPWLVKQLTKLGLKGATPIQQ) match the Q motif motif. In terms of domain architecture, Helicase ATP-binding spans 38–209 (IPAILAGQDC…IFPIASDCFE (172 aa)). An ATP-binding site is contributed by 51–58 (AKTGSGKT). A DEAD box motif is present at residues 157 to 160 (DEAD). Residues 237–386 (VLIEALRKYR…EHPIDQRMVE (150 aa)) enclose the Helicase C-terminal domain. The tract at residues 448 to 521 (KRKLQHAEPA…GRADVKKDKA (74 aa)) is disordered. Composition is skewed to basic and acidic residues over residues 460-482 (EEGK…FEKK) and 502-521 (LNKE…KDKA).

The protein belongs to the DEAD box helicase family. DDX49/DBP8 subfamily.

It carries out the reaction ATP + H2O = ADP + phosphate + H(+). In terms of biological role, probable ATP-binding RNA helicase. This is Probable ATP-dependent RNA helicase Dbp45A (Dbp45A) from Drosophila melanogaster (Fruit fly).